The following is a 187-amino-acid chain: Elongation factor P (187 aa).

It belongs to the elongation factor P family.

The protein localises to the cytoplasm. It participates in protein biosynthesis; polypeptide chain elongation. In terms of biological role, involved in peptide bond synthesis. Stimulates efficient translation and peptide-bond synthesis on native or reconstituted 70S ribosomes in vitro. Probably functions indirectly by altering the affinity of the ribosome for aminoacyl-tRNA, thus increasing their reactivity as acceptors for peptidyl transferase. The sequence is that of Elongation factor P from Mycobacterium marinum (strain ATCC BAA-535 / M).